Here is a 454-residue protein sequence, read N- to C-terminus: Pyrimidine/purine nucleotide 5'-monophosphate nucleosidase (454 aa).

It belongs to the LOG family.

The catalysed reaction is a pyrimidine ribonucleoside 5'-phosphate + H2O = a pyrimidine nucleobase + D-ribose 5-phosphate. It catalyses the reaction AMP + H2O = adenine + D-ribose 5-phosphate. It carries out the reaction GMP + H2O = guanine + D-ribose 5-phosphate. The enzyme catalyses CMP + H2O = cytosine + D-ribose 5-phosphate. The catalysed reaction is IMP + H2O = hypoxanthine + D-ribose 5-phosphate. It catalyses the reaction UMP + H2O = D-ribose 5-phosphate + uracil. It carries out the reaction dTMP + H2O = 2-deoxy-D-ribose 5-phosphate + thymine. Its function is as follows. Catalyzes the hydrolysis of the N-glycosidic bond of diverse pyrimidine and purine nucleotide 5'-monophosphates, to form ribose 5-phosphate and the corresponding free base. Can use AMP, GMP, IMP, CMP, dTMP and UMP as substrates. Cannot catalyze the reverse reactions. May contribute to nucleoside pool homeostasis by degrading excess nucleotides and feeding back the ribose moiety to catabolism. In Escherichia coli O157:H7, this protein is Pyrimidine/purine nucleotide 5'-monophosphate nucleosidase.